A 560-amino-acid chain; its full sequence is Oxygen-dependent choline dehydrogenase 1 (560 aa).

Position 8–37 (8–37 (DYIIIGAGSAGNVLATRLTEDPDVQVLLLE)) interacts with FAD. The Proton acceptor role is filled by histidine 475.

The protein belongs to the GMC oxidoreductase family. FAD is required as a cofactor.

The enzyme catalyses choline + A = betaine aldehyde + AH2. It carries out the reaction betaine aldehyde + NAD(+) + H2O = glycine betaine + NADH + 2 H(+). It functions in the pathway amine and polyamine biosynthesis; betaine biosynthesis via choline pathway; betaine aldehyde from choline (cytochrome c reductase route): step 1/1. Functionally, involved in the biosynthesis of the osmoprotectant glycine betaine. Catalyzes the oxidation of choline to betaine aldehyde and betaine aldehyde to glycine betaine at the same rate. The protein is Oxygen-dependent choline dehydrogenase 1 of Chromohalobacter salexigens (strain ATCC BAA-138 / DSM 3043 / CIP 106854 / NCIMB 13768 / 1H11).